The primary structure comprises 181 residues: Photosystem I assembly protein Ycf4 (181 aa).

The next 2 helical transmembrane spans lie at 19-41 (YFWA…SSYF) and 61-83 (LVMS…TLFW).

Belongs to the Ycf4 family.

The protein localises to the plastid. Its subcellular location is the chloroplast thylakoid membrane. In terms of biological role, seems to be required for the assembly of the photosystem I complex. The protein is Photosystem I assembly protein Ycf4 of Trieres chinensis (Marine centric diatom).